A 223-amino-acid polypeptide reads, in one-letter code: Lipoprotein-releasing system ATP-binding protein LolD (223 aa).

The 223-residue stretch at 1–223 (MAKVFRSGST…DEVEPQSLPA (223 aa)) folds into the ABC transporter domain. Position 32–39 (32–39 (GDSGSGKS)) interacts with ATP.

Belongs to the ABC transporter superfamily. Lipoprotein translocase (TC 3.A.1.125) family. As to quaternary structure, the complex is composed of two ATP-binding proteins (LolD) and two transmembrane proteins (LolC and LolE).

It is found in the cell inner membrane. Functionally, part of the ABC transporter complex LolCDE involved in the translocation of mature outer membrane-directed lipoproteins, from the inner membrane to the periplasmic chaperone, LolA. Responsible for the formation of the LolA-lipoprotein complex in an ATP-dependent manner. The polypeptide is Lipoprotein-releasing system ATP-binding protein LolD (Koribacter versatilis (strain Ellin345)).